Here is a 437-residue protein sequence, read N- to C-terminus: Protein translocase subunit SecY (437 aa).

The next 10 helical transmembrane spans lie at leucine 19–valine 39, leucine 69–leucine 89, valine 122–phenylalanine 142, isoleucine 157–leucine 177, glycine 189–isoleucine 209, tryptophan 219–valine 239, glycine 275–phenylalanine 295, histidine 318–phenylalanine 338, glycine 378–alanine 398, and glutamine 400–valine 420.

Belongs to the SecY/SEC61-alpha family. Component of the Sec protein translocase complex. Heterotrimer consisting of SecY, SecE and SecG subunits. The heterotrimers can form oligomers, although 1 heterotrimer is thought to be able to translocate proteins. Interacts with the ribosome. Interacts with SecDF, and other proteins may be involved. Interacts with SecA.

It is found in the cell membrane. Its function is as follows. The central subunit of the protein translocation channel SecYEG. Consists of two halves formed by TMs 1-5 and 6-10. These two domains form a lateral gate at the front which open onto the bilayer between TMs 2 and 7, and are clamped together by SecE at the back. The channel is closed by both a pore ring composed of hydrophobic SecY resides and a short helix (helix 2A) on the extracellular side of the membrane which forms a plug. The plug probably moves laterally to allow the channel to open. The ring and the pore may move independently. This is Protein translocase subunit SecY from Streptomyces coelicolor (strain ATCC BAA-471 / A3(2) / M145).